Here is a 657-residue protein sequence, read N- to C-terminus: Protein FAM200B (657 aa).

It belongs to the FAM200 family.

This is Protein FAM200B from Homo sapiens (Human).